The sequence spans 425 residues: SrfA-induced gene G protein (425 aa).

N-linked (GlcNAc...) asparagine glycans are attached at residues asparagine 25, asparagine 28, and asparagine 36. Coiled coils occupy residues 41-91, 172-208, and 292-340; these read RDSE…RIRN, HEKQ…MKRT, and KFGQ…NYNI. The helical transmembrane segment at 91–113 threads the bilayer; that stretch reads NVFKVLITILVGSIIYGTYTNQF. A disordered region spans residues 393–413; sequence KKPHADSNGHPKPYPHHHLLN.

The protein localises to the membrane. The chain is SrfA-induced gene G protein (sigG) from Dictyostelium discoideum (Social amoeba).